We begin with the raw amino-acid sequence, 1997 residues long: Nucleoprotein TPR (1997 aa).

4 coiled-coil regions span residues 1–36 (QEQH…NDLL), 101–277 (EIVK…HQMT), 335–1103 (DSTE…IKTI), and 1129–1305 (AEAS…EPQE). Basic and acidic residues-rich tracts occupy residues 672–702 (SSEY…KTVE) and 1290–1305 (REQQ…EPQE). Disordered stretches follow at residues 672-706 (SSEY…QMEQ), 1290-1352 (REQQ…AAVP), 1438-1529 (AFVQ…KTET), 1561-1752 (IQTS…RRQS), 1795-1832 (AIHS…ASQG), and 1870-1997 (ENPA…RSNI). 3 stretches are compositionally biased toward polar residues: residues 1306-1321 (TTRI…QPTT), 1328-1347 (SANT…SKVT), and 1446-1487 (SHAT…SSSI). The span at 1511–1529 (DQQRTKKRKEEDIEEKTET) shows a compositional bias: basic and acidic residues. Residues 1561 to 1587 (IQTSQVIESQAPEQLQNVQSTQDSLQD) show a composition bias toward polar residues. Composition is skewed to acidic residues over residues 1601–1637 (SDEE…DSNE) and 1644–1667 (GNED…ETED). 3 stretches are compositionally biased toward polar residues: residues 1692–1709 (AEST…SASD), 1817–1830 (QASS…QLAS), and 1879–1899 (HASQ…TSVD). Positions 1902–1915 (AADEGDEVFVEAES) are enriched in acidic residues. Residues 1950-1959 (SSSIADTSSS) are compositionally biased toward low complexity.

The protein belongs to the TPR family. Homodimer. Part of the nuclear pore complex (NPC). Interacts with nuclear receptor KPNB1; the interaction occurs in a RanGTP-dependent manner. Associates with the Importin alpha/Importin beta receptor. In terms of tissue distribution, expressed in epithelial cells, oocytes and egg (at protein level).

It localises to the nucleus. The protein resides in the nucleus membrane. Its subcellular location is the nucleus envelope. The protein localises to the nuclear pore complex. It is found in the cytoplasm. It localises to the cytoskeleton. The protein resides in the spindle. Its subcellular location is the chromosome. The protein localises to the centromere. It is found in the kinetochore. Its function is as follows. Component of the nuclear pore complex (NPC), a complex required for the trafficking across the nuclear envelope. Functions as a scaffolding element in the nuclear phase of the NPC essential for normal nucleocytoplasmic transport of proteins and mRNAs, plays a role in the establishment of nuclear-peripheral chromatin compartmentalization in interphase, and in the mitotic spindle checkpoint signaling during mitosis. Involved in the quality control and retention of unspliced mRNAs in the nucleus. Implicated in nuclear export of mRNAs transcribed from heat shock gene promoters. May play a limited role in the regulation of nuclear protein export. May be involved in the formation and/or maintenance of NPC-associated perinuclear heterochromatin exclusion zones (HEZs). Finally, may act as a spatial regulator of the spindle-assembly checkpoint (SAC) response. The polypeptide is Nucleoprotein TPR (Xenopus laevis (African clawed frog)).